Here is a 373-residue protein sequence, read N- to C-terminus: Integrator complex subunit 15 (373 aa).

It belongs to the Integrator subunit 15 family. As to quaternary structure, belongs to the multiprotein complex Integrator, at least composed of IntS1, IntS2, IntS3, IntS4, omd/IntS5, IntS6, defl/IntS7, IntS8, IntS9, IntS10, IntS11, IntS12, asun/IntS13, IntS14 and IntS15. The core complex associates with protein phosphatase 2A subunits mts/PP2A and Pp2A-29B, to form the Integrator-PP2A (INTAC) complex.

The protein resides in the nucleus. In terms of biological role, component of the integrator complex, a multiprotein complex that terminates RNA polymerase II (Pol II) transcription in the promoter-proximal region of genes. The integrator complex provides a quality checkpoint during transcription elongation by driving premature transcription termination of transcripts that are unfavorably configured for transcriptional elongation: the complex terminates transcription by (1) catalyzing dephosphorylation of the C-terminal domain (CTD) of Pol II subunit Rbp1 and Spt5, and (2) degrading the exiting nascent RNA transcript via endonuclease activity. The integrator complex is also involved in the 3'-end processing of the U7 snRNA, and also the spliceosomal snRNAs U1, U2, U4 and U5. In Drosophila melanogaster (Fruit fly), this protein is Integrator complex subunit 15.